Here is a 330-residue protein sequence, read N- to C-terminus: Aspartate--ammonia ligase (330 aa).

This sequence belongs to the class-II aminoacyl-tRNA synthetase family. AsnA subfamily.

The protein localises to the cytoplasm. It carries out the reaction L-aspartate + NH4(+) + ATP = L-asparagine + AMP + diphosphate + H(+). Its pathway is amino-acid biosynthesis; L-asparagine biosynthesis; L-asparagine from L-aspartate (ammonia route): step 1/1. The protein is Aspartate--ammonia ligase of Salmonella agona (strain SL483).